Consider the following 107-residue polypeptide: Early E3A 12.5 kDa protein (107 aa).

Belongs to the adenoviridae E3A-2 family.

This Homo sapiens (Human) protein is Early E3A 12.5 kDa protein.